Consider the following 138-residue polypeptide: Ribulose bisphosphate carboxylase small subunit (138 aa).

The protein belongs to the RuBisCO small chain family. As to quaternary structure, heterohexadecamer of 8 large and 8 small subunits.

It is found in the plastid. The protein localises to the chloroplast. Its function is as follows. RuBisCO catalyzes two reactions: the carboxylation of D-ribulose 1,5-bisphosphate, the primary event in carbon dioxide fixation, as well as the oxidative fragmentation of the pentose substrate in the photorespiration process. Both reactions occur simultaneously and in competition at the same active site. Although the small subunit is not catalytic it is essential for maximal activity. Carbon dioxide and oxygen bind in the same pocket of the enzyme in a similar manner. The polypeptide is Ribulose bisphosphate carboxylase small subunit (Galdieria sulphuraria (Red alga)).